The following is a 244-amino-acid chain: Phosphoadenosine 5'-phosphosulfate reductase (244 aa).

The active-site Nucleophile; cysteine thiosulfonate intermediate is Cys-239.

This sequence belongs to the PAPS reductase family. CysH subfamily.

It is found in the cytoplasm. The enzyme catalyses [thioredoxin]-disulfide + sulfite + adenosine 3',5'-bisphosphate + 2 H(+) = [thioredoxin]-dithiol + 3'-phosphoadenylyl sulfate. It participates in sulfur metabolism; hydrogen sulfide biosynthesis; sulfite from sulfate: step 3/3. Functionally, catalyzes the formation of sulfite from phosphoadenosine 5'-phosphosulfate (PAPS) using thioredoxin as an electron donor. This Buchnera aphidicola subsp. Acyrthosiphon pisum (strain Tuc7) protein is Phosphoadenosine 5'-phosphosulfate reductase.